A 250-amino-acid chain; its full sequence is Ribosome-inactivating protein luffin-B (250 aa).

The active site involves Glu-160.

This sequence belongs to the ribosome-inactivating protein family. Type 1 RIP subfamily.

It catalyses the reaction Endohydrolysis of the N-glycosidic bond at one specific adenosine on the 28S rRNA.. The sequence is that of Ribosome-inactivating protein luffin-B from Luffa aegyptiaca (Sponge gourd).